A 277-amino-acid polypeptide reads, in one-letter code: 3-methyl-2-oxobutanoate hydroxymethyltransferase (277 aa).

Mg(2+) contacts are provided by aspartate 43 and aspartate 82. Residues 43 to 44, aspartate 82, and lysine 112 contribute to the 3-methyl-2-oxobutanoate site; that span reads DS. Mg(2+) is bound at residue glutamate 114. Catalysis depends on glutamate 181, which acts as the Proton acceptor.

This sequence belongs to the PanB family. In terms of assembly, homodecamer; pentamer of dimers. It depends on Mg(2+) as a cofactor.

It is found in the cytoplasm. The catalysed reaction is 3-methyl-2-oxobutanoate + (6R)-5,10-methylene-5,6,7,8-tetrahydrofolate + H2O = 2-dehydropantoate + (6S)-5,6,7,8-tetrahydrofolate. The protein operates within cofactor biosynthesis; (R)-pantothenate biosynthesis; (R)-pantoate from 3-methyl-2-oxobutanoate: step 1/2. Functionally, catalyzes the reversible reaction in which hydroxymethyl group from 5,10-methylenetetrahydrofolate is transferred onto alpha-ketoisovalerate to form ketopantoate. In Listeria monocytogenes serovar 1/2a (strain ATCC BAA-679 / EGD-e), this protein is 3-methyl-2-oxobutanoate hydroxymethyltransferase.